We begin with the raw amino-acid sequence, 706 residues long: Elongation factor G (706 aa).

The 277-residue stretch at 15-291 (LKTRNIGISA…GVLDYLASPV (277 aa)) folds into the tr-type G domain. GTP-binding positions include 24-31 (AHIDSGKT), 91-95 (DTPGH), and 145-148 (NKLD).

Belongs to the TRAFAC class translation factor GTPase superfamily. Classic translation factor GTPase family. EF-G/EF-2 subfamily.

The protein localises to the cytoplasm. Its function is as follows. Catalyzes the GTP-dependent ribosomal translocation step during translation elongation. During this step, the ribosome changes from the pre-translocational (PRE) to the post-translocational (POST) state as the newly formed A-site-bound peptidyl-tRNA and P-site-bound deacylated tRNA move to the P and E sites, respectively. Catalyzes the coordinated movement of the two tRNA molecules, the mRNA and conformational changes in the ribosome. The sequence is that of Elongation factor G from Leptospira borgpetersenii serovar Hardjo-bovis (strain L550).